The sequence spans 435 residues: Homoserine dehydrogenase (435 aa).

The NADPH site is built by threonine 13, valine 14, and lysine 104. Position 14 (valine 14) interacts with NAD(+). NADP(+)-binding residues include valine 14 and lysine 104. Na(+)-binding residues include glutamate 128, valine 131, glycine 133, and isoleucine 135. Residues glycine 186 and glutamate 189 each contribute to the NADP(+) site. Residues glutamate 189 and aspartate 200 each contribute to the L-homoserine site. Lysine 204 (proton donor) is an active-site residue. Glycine 301 is an NADPH binding site. Glycine 301 is a binding site for NAD(+). Residue glycine 301 coordinates NADP(+). In terms of domain architecture, ACT spans 354 to 429 (YLRVQAKDEP…CVEKPITMIR (76 aa)).

Belongs to the homoserine dehydrogenase family. In terms of assembly, homotetramer. It depends on a metal cation as a cofactor.

The catalysed reaction is L-homoserine + NAD(+) = L-aspartate 4-semialdehyde + NADH + H(+). Its pathway is amino-acid biosynthesis; L-methionine biosynthesis via de novo pathway; L-homoserine from L-aspartate: step 3/3. It participates in amino-acid biosynthesis; L-threonine biosynthesis; L-threonine from L-aspartate: step 3/5. Its activity is regulated as follows. Neither NaCl nor KCl increase the activity. L-threonine and L-serine do not markedly inhibit the oxidation activity. Functionally, catalyzes the conversion of L-aspartate-beta-semialdehyde (L-Asa) to L-homoserine (L-Hse), the third step in the biosynthesis of threonine and methionine from aspartate. Is highly specific for NAD(+), and displays an approximate 479-fold (kcat/Km) preference for NAD(+) over NADP(+). The sequence is that of Homoserine dehydrogenase from Neisseria gonorrhoeae (strain ATCC 700825 / FA 1090).